The sequence spans 111 residues: MRPTPKVEIWKSPVPYLFGGLFLLVLLIALALLSLVCTHQKPSSSSNNNHMDEEDDVGDKDAKPITREYLPKIVVILAGDNKPTCLAVPVVVPPPTSIFRCNCDNVTVIST.

The Extracellular portion of the chain corresponds to 1-16; the sequence is MRPTPKVEIWKSPVPY. Residues 17–37 traverse the membrane as a helical segment; it reads LFGGLFLLVLLIALALLSLVC. Over 38–111 the chain is Cytoplasmic; the sequence is THQKPSSSSN…NCDNVTVIST (74 aa). A compositionally biased stretch (polar residues) spans 40–49; sequence QKPSSSSNNN. A disordered region spans residues 40–63; the sequence is QKPSSSSNNNHMDEEDDVGDKDAK. The VIMAG; degenerate motif lies at 75 to 79; the sequence is VILAG.

This sequence belongs to the GLUTAMINE DUMPER 1 (TC 9.B.60) family. Expressed in the vascular tissues.

It localises to the membrane. Its function is as follows. Probable subunit of an amino acid transporter involved in the regulation of the amino acid metabolism. Stimulates amino acid export by activating nonselective amino acid facilitators. The protein is Protein GLUTAMINE DUMPER 6 (GDU6) of Arabidopsis thaliana (Mouse-ear cress).